Here is a 316-residue protein sequence, read N- to C-terminus: MYEWLNALPKAELHLHLEGTLEPELLFALAERNRIALPWNDVETLRKAYAFNNLQEFLDLYYAGADVLRTEQDFYDLTWAYLQKCKAQNVVHVEPFFDPQTHTDRGIPFEVVLAGIRAALRDGEKLLGIRHGLILSFLRHLSEEQAQKTLDQALPFRDAFIAVGLDSSEVGHPPSKFQRVFDRARSEGFLTVAHAGEEGPPEYIWEALDLLKVERIDHGVRAFEDERLMRRLIDEQIPLTVCPLSNTKLCVFDDMSQHTILDMLERGVKVTVNSDDPAYFGGYVTENFHALQQSLGMTEEQARRLAQNSLDARLVK.

Zn(2+) is bound by residues H14, H16, and H194. E197 (proton donor) is an active-site residue. D275 contacts Zn(2+). D276 provides a ligand contact to substrate.

The protein belongs to the metallo-dependent hydrolases superfamily. Adenosine and AMP deaminases family. Adenine deaminase type 2 subfamily. Requires Zn(2+) as cofactor.

The catalysed reaction is adenine + H2O + H(+) = hypoxanthine + NH4(+). Its function is as follows. Catalyzes the hydrolytic deamination of adenine to hypoxanthine. Plays an important role in the purine salvage pathway and in nitrogen catabolism. The chain is Adenine deaminase from Pseudomonas aeruginosa (strain LESB58).